Reading from the N-terminus, the 499-residue chain is Cobyric acid synthase (499 aa).

Residues 246–441 form the GATase cobBQ-type domain; sequence PIDIAIIKLP…IHGIFDGAEL (196 aa). Cys-327 serves as the catalytic Nucleophile. His-433 is a catalytic residue.

Belongs to the CobB/CobQ family. CobQ subfamily.

It functions in the pathway cofactor biosynthesis; adenosylcobalamin biosynthesis. Its function is as follows. Catalyzes amidations at positions B, D, E, and G on adenosylcobyrinic A,C-diamide. NH(2) groups are provided by glutamine, and one molecule of ATP is hydrogenolyzed for each amidation. The sequence is that of Cobyric acid synthase from Clostridium kluyveri (strain NBRC 12016).